The chain runs to 415 residues: Vascular endothelial growth factor C (415 aa).

The N-terminal stretch at 1–31 is a signal peptide; the sequence is MHLLCFLSLACSLLAAALIPSPREAPATVAA. The propeptide occupies 32-107; it reads FESGLGFSEA…RTGDSVKFAA (76 aa). 3 disulfide bridges follow: Cys-127-Cys-169, Cys-158-Cys-205, and Cys-162-Cys-207. Residues Asn-171, Asn-201, and Asn-236 are each glycosylated (N-linked (GlcNAc...) asparagine). Positions 224–415 are excised as a propeptide; that stretch reads SLPATLPQCQ…PSYWKRPHLN (192 aa). 4 tandem repeats follow at residues 276–291, 300–315, 324–339, and 343–358. Residues 276–358 form a 4 X 16 AA repeats of C-X(10)-C-X-C-X(1,3)-C region; the sequence is CGPNKELDED…LNPGKCACEC (83 aa).

Belongs to the PDGF/VEGF growth factor family. Homodimer; non-covalent and antiparallel. Interacts with FLT4/VEGFR3; the interaction is required for FLT4/VEGFR3 homodimarization and activation. Undergoes a complex proteolytic maturation which generates a variety of processed secreted forms with increased activity toward VEGFR-3, but only the fully processed form could activate VEGFR-2. VEGF-C first form an antiparallel homodimer linked by disulfide bonds. Before secretion, a cleavage occurs between Arg-223 and Ser-224 producing a heterotetramer. The next extracellular step of the processing removes the N-terminal propeptide. Finally the mature VEGF-C is composed mostly of two VEGF homology domains (VHDs) bound by non-covalent interactions. In terms of tissue distribution, expressed in adult heart, brain, spleen, lung, liver, skeletal muscle, kidney, testis and intestine with higher levels in heart, brain and kidney. Isoform 4 levels are very low. Isoform 3 is mostly expressed in liver and has reduced expression level in other tissues. Isoform 2 is mostly expressed in brain and kidney, although a lower level expression in other tissues is also detectable.

The protein resides in the secreted. Functionally, growth factor active in angiogenesis, and endothelial cell growth, stimulating their proliferation and migration and also has effects on the permeability of blood vessels. May function in angiogenesis of the venous and lymphatic vascular systems during embryogenesis, and also in the maintenance of differentiated lymphatic endothelium in adults. Binds and activates KDR/VEGFR2 and FLT4/VEGFR3 receptors. This is Vascular endothelial growth factor C (Vegfc) from Mus musculus (Mouse).